The chain runs to 59 residues: Large ribosomal subunit protein uL30 (59 aa).

This sequence belongs to the universal ribosomal protein uL30 family. Part of the 50S ribosomal subunit.

The chain is Large ribosomal subunit protein uL30 from Proteus mirabilis (strain HI4320).